We begin with the raw amino-acid sequence, 438 residues long: Na(+)/H(+) antiporter NhaA (438 aa).

11 helical membrane-spanning segments follow: residues 23–43 (FGGI…NSFL), 62–82 (FFIG…LFFL), 104–124 (SFPV…YFFL), 133–153 (GFGI…MLLG), 162–182 (VFLI…IALF), 185–205 (TNLK…LALL), 221–241 (VLLW…AVVL), 302–322 (FLAP…NAGV), 337–357 (FGVI…ITFI), 372–392 (WWHI…SMFI), and 410–430 (IAIL…LFAL).

The protein belongs to the NhaA Na(+)/H(+) (TC 2.A.33) antiporter family.

It is found in the cell inner membrane. The catalysed reaction is Na(+)(in) + 2 H(+)(out) = Na(+)(out) + 2 H(+)(in). Its function is as follows. Na(+)/H(+) antiporter that extrudes sodium in exchange for external protons. This is Na(+)/H(+) antiporter NhaA from Helicobacter pylori (strain P12).